The primary structure comprises 229 residues: Type III pantothenate kinase (229 aa).

ATP is bound at residue 6 to 13 (NIGNSRQH). Residues Y77 and 81-84 (GIDR) contribute to the substrate site. Catalysis depends on D83, which acts as the Proton acceptor. D103 lines the K(+) pocket. T106 serves as a coordination point for ATP. T159 contributes to the substrate binding site.

This sequence belongs to the type III pantothenate kinase family. Homodimer. Requires NH4(+) as cofactor. K(+) serves as cofactor.

Its subcellular location is the cytoplasm. It carries out the reaction (R)-pantothenate + ATP = (R)-4'-phosphopantothenate + ADP + H(+). Its pathway is cofactor biosynthesis; coenzyme A biosynthesis; CoA from (R)-pantothenate: step 1/5. Its function is as follows. Catalyzes the phosphorylation of pantothenate (Pan), the first step in CoA biosynthesis. The polypeptide is Type III pantothenate kinase (Gloeobacter violaceus (strain ATCC 29082 / PCC 7421)).